The following is a 185-amino-acid chain: Ribosome-recycling factor (185 aa).

The protein belongs to the RRF family.

The protein localises to the cytoplasm. Its function is as follows. Responsible for the release of ribosomes from messenger RNA at the termination of protein biosynthesis. May increase the efficiency of translation by recycling ribosomes from one round of translation to another. This is Ribosome-recycling factor from Bacillus licheniformis (strain ATCC 14580 / DSM 13 / JCM 2505 / CCUG 7422 / NBRC 12200 / NCIMB 9375 / NCTC 10341 / NRRL NRS-1264 / Gibson 46).